The sequence spans 340 residues: tRNA N6-adenosine threonylcarbamoyltransferase (340 aa).

2 residues coordinate Fe cation: histidine 111 and histidine 115. Substrate-binding positions include 134–138, aspartate 167, glycine 180, and asparagine 276; that span reads LVSGG. Aspartate 304 serves as a coordination point for Fe cation.

This sequence belongs to the KAE1 / TsaD family. Fe(2+) is required as a cofactor.

The protein resides in the cytoplasm. It carries out the reaction L-threonylcarbamoyladenylate + adenosine(37) in tRNA = N(6)-L-threonylcarbamoyladenosine(37) in tRNA + AMP + H(+). Required for the formation of a threonylcarbamoyl group on adenosine at position 37 (t(6)A37) in tRNAs that read codons beginning with adenine. Is involved in the transfer of the threonylcarbamoyl moiety of threonylcarbamoyl-AMP (TC-AMP) to the N6 group of A37, together with TsaE and TsaB. TsaD likely plays a direct catalytic role in this reaction. In Helicobacter pylori (strain G27), this protein is tRNA N6-adenosine threonylcarbamoyltransferase.